We begin with the raw amino-acid sequence, 376 residues long: Mitogen-activated protein kinase 2 (376 aa).

The region spanning 32–319 (YVPIKPIGRG…VTEALQHPYM (288 aa)) is the Protein kinase domain. ATP is bound by residues 38-46 (IGRGAYGVV) and Lys-61. The active-site Proton acceptor is Asp-158. The residue at position 191 (Thr-191) is a Phosphothreonine. Residues 191–193 (TEY) carry the TXY motif. Tyr-193 carries the phosphotyrosine modification. Thr-196 is subject to Phosphothreonine.

The protein belongs to the protein kinase superfamily. CMGC Ser/Thr protein kinase family. MAP kinase subfamily. Interacts with MKK3. In terms of processing, dually phosphorylated on Thr-191 and Tyr-193, which activates the enzyme. Phosphorylated on Ser residue. Highest levels in the stem. Present in the leaf, root and flower, but not in seeds.

The catalysed reaction is L-seryl-[protein] + ATP = O-phospho-L-seryl-[protein] + ADP + H(+). It catalyses the reaction L-threonyl-[protein] + ATP = O-phospho-L-threonyl-[protein] + ADP + H(+). With respect to regulation, activated by threonine and tyrosine phosphorylation. The protein is Mitogen-activated protein kinase 2 (MPK2) of Arabidopsis thaliana (Mouse-ear cress).